Here is a 209-residue protein sequence, read N- to C-terminus: uncharacterized protein (209 aa).

The signal sequence occupies residues 1–17 (MKRLVTGLLALSLFLAA). The interval 17–105 (ACGQDSDQQK…SNNQANNNQK (89 aa)) is disordered. A lipid anchor (N-palmitoyl cysteine) is attached at cysteine 18. Residue cysteine 18 is the site of S-diacylglycerol cysteine attachment. Residues 23 to 70 (DQQKDSNKEKDDKAKTEQQDEKTNDSSKDKKDKKDDSKDVNKDNKDNS) show a composition bias toward basic and acidic residues. Low complexity predominate over residues 71–105 (ANDNQQQSNSNATNNDQNQTNNNQSSNNQANNNQK).

It localises to the cell membrane. This is an uncharacterized protein from Staphylococcus aureus (strain bovine RF122 / ET3-1).